The sequence spans 166 residues: Interferon gamma (166 aa).

The signal sequence occupies residues 1 to 23; sequence MKYTSYFLALQLCLLLGFSGSYG. Position 24 is a pyrrolidone carboxylic acid (Q24). N-linked (GlcNAc...) asparagine glycans are attached at residues N39 and N106.

The protein belongs to the type II (or gamma) interferon family. In terms of assembly, homodimer. Interacts with IFNGR1 (via extracellular domain); this interaction promotes IFNGR1 dimerization. In terms of tissue distribution, released primarily from activated T lymphocytes.

Its subcellular location is the secreted. Its function is as follows. Type II interferon produced by immune cells such as T-cells and NK cells that plays crucial roles in antimicrobial, antiviral, and antitumor responses by activating effector immune cells and enhancing antigen presentation. Primarily signals through the JAK-STAT pathway after interaction with its receptor IFNGR1 to affect gene regulation. Upon IFNG binding, IFNGR1 intracellular domain opens out to allow association of downstream signaling components JAK2, JAK1 and STAT1, leading to STAT1 activation, nuclear translocation and transcription of IFNG-regulated genes. Many of the induced genes are transcription factors such as IRF1 that are able to further drive regulation of a next wave of transcription. Plays a role in class I antigen presentation pathway by inducing a replacement of catalytic proteasome subunits with immunoproteasome subunits. In turn, increases the quantity, quality, and repertoire of peptides for class I MHC loading. Increases the efficiency of peptide generation also by inducing the expression of activator PA28 that associates with the proteasome and alters its proteolytic cleavage preference. Up-regulates as well MHC II complexes on the cell surface by promoting expression of several key molecules such as cathepsins B/CTSB, H/CTSH, and L/CTSL. Participates in the regulation of hematopoietic stem cells during development and under homeostatic conditions by affecting their development, quiescence, and differentiation. In Moschus berezovskii (Chinese forest musk deer), this protein is Interferon gamma (IFNG).